Reading from the N-terminus, the 555-residue chain is Glutamate--tRNA ligase (555 aa).

The 'HIGH' region signature appears at 100–110; the sequence is PNPSGPLHIGH.

Belongs to the class-I aminoacyl-tRNA synthetase family. Glutamate--tRNA ligase type 2 subfamily.

It localises to the cytoplasm. It catalyses the reaction tRNA(Glu) + L-glutamate + ATP = L-glutamyl-tRNA(Glu) + AMP + diphosphate. Its function is as follows. Catalyzes the attachment of glutamate to tRNA(Glu) in a two-step reaction: glutamate is first activated by ATP to form Glu-AMP and then transferred to the acceptor end of tRNA(Glu). The chain is Glutamate--tRNA ligase from Methanococcus maripaludis (strain C6 / ATCC BAA-1332).